The chain runs to 588 residues: Sulfite reductase [NADPH] hemoprotein beta-component (588 aa).

4 residues coordinate [4Fe-4S] cluster: Cys442, Cys448, Cys487, and Cys491. Cys491 contributes to the siroheme binding site.

It belongs to the nitrite and sulfite reductase 4Fe-4S domain family. In terms of assembly, alpha(8)-beta(8). The alpha component is a flavoprotein, the beta component is a hemoprotein. Requires siroheme as cofactor. It depends on [4Fe-4S] cluster as a cofactor.

It catalyses the reaction hydrogen sulfide + 3 NADP(+) + 3 H2O = sulfite + 3 NADPH + 4 H(+). Its pathway is sulfur metabolism; hydrogen sulfide biosynthesis; hydrogen sulfide from sulfite (NADPH route): step 1/1. Functionally, component of the sulfite reductase complex that catalyzes the 6-electron reduction of sulfite to sulfide. This is one of several activities required for the biosynthesis of L-cysteine from sulfate. The sequence is that of Sulfite reductase [NADPH] hemoprotein beta-component from Actinobacillus pleuropneumoniae serotype 3 (strain JL03).